A 319-amino-acid chain; its full sequence is Beta-ketoacyl-[acyl-carrier-protein] synthase III (319 aa).

Active-site residues include Cys115 and His246. The tract at residues Gln247–Arg251 is ACP-binding. The active site involves Asn276.

This sequence belongs to the thiolase-like superfamily. FabH family. Homodimer.

The protein resides in the cytoplasm. It catalyses the reaction malonyl-[ACP] + acetyl-CoA + H(+) = 3-oxobutanoyl-[ACP] + CO2 + CoA. The protein operates within lipid metabolism; fatty acid biosynthesis. Functionally, catalyzes the condensation reaction of fatty acid synthesis by the addition to an acyl acceptor of two carbons from malonyl-ACP. Catalyzes the first condensation reaction which initiates fatty acid synthesis and may therefore play a role in governing the total rate of fatty acid production. Possesses both acetoacetyl-ACP synthase and acetyl transacylase activities. Its substrate specificity determines the biosynthesis of branched-chain and/or straight-chain of fatty acids. The chain is Beta-ketoacyl-[acyl-carrier-protein] synthase III from Coxiella burnetii (strain Dugway 5J108-111).